The chain runs to 396 residues: Mitogen-activated protein kinase mpkC (396 aa).

Positions 20-299 (YSDLQPVGLG…AAKALEHPYL (280 aa)) constitute a Protein kinase domain. Residues 26–34 (VGLGAFGLV) and Lys49 contribute to the ATP site. Asp141 serves as the catalytic Proton acceptor. Phosphothreonine is present on Thr171. The TXY motif lies at 171–173 (TGY). A Phosphotyrosine modification is found at Tyr173.

It belongs to the protein kinase superfamily. Ser/Thr protein kinase family. MAP kinase subfamily. HOG1 sub-subfamily. The cofactor is Mg(2+). Dually phosphorylated on Thr-171 and Tyr-173, which activates the enzyme.

The enzyme catalyses L-seryl-[protein] + ATP = O-phospho-L-seryl-[protein] + ADP + H(+). It catalyses the reaction L-threonyl-[protein] + ATP = O-phospho-L-threonyl-[protein] + ADP + H(+). Activated by tyrosine and threonine phosphorylation. Mitogen-activated protein kinase required for growth on media where sorbitol or mannitol is the sole carbon source. The chain is Mitogen-activated protein kinase mpkC (mpkC) from Aspergillus niger (strain ATCC MYA-4892 / CBS 513.88 / FGSC A1513).